The chain runs to 256 residues: Ubiquinone/menaquinone biosynthesis C-methyltransferase UbiE (256 aa).

S-adenosyl-L-methionine contacts are provided by residues T79, D100, and 128-129 (DA).

This sequence belongs to the class I-like SAM-binding methyltransferase superfamily. MenG/UbiE family.

The enzyme catalyses a 2-demethylmenaquinol + S-adenosyl-L-methionine = a menaquinol + S-adenosyl-L-homocysteine + H(+). It catalyses the reaction a 2-methoxy-6-(all-trans-polyprenyl)benzene-1,4-diol + S-adenosyl-L-methionine = a 5-methoxy-2-methyl-3-(all-trans-polyprenyl)benzene-1,4-diol + S-adenosyl-L-homocysteine + H(+). It participates in quinol/quinone metabolism; menaquinone biosynthesis; menaquinol from 1,4-dihydroxy-2-naphthoate: step 2/2. Its pathway is cofactor biosynthesis; ubiquinone biosynthesis. In terms of biological role, methyltransferase required for the conversion of demethylmenaquinol (DMKH2) to menaquinol (MKH2) and the conversion of 2-polyprenyl-6-methoxy-1,4-benzoquinol (DDMQH2) to 2-polyprenyl-3-methyl-6-methoxy-1,4-benzoquinol (DMQH2). This is Ubiquinone/menaquinone biosynthesis C-methyltransferase UbiE from Pseudomonas paraeruginosa (strain DSM 24068 / PA7) (Pseudomonas aeruginosa (strain PA7)).